The primary structure comprises 183 residues: Neuroblastoma suppressor of tumorigenicity 1 (183 aa).

Residues 1 to 19 form the signal peptide; that stretch reads MVMCVRAVLVCVLLELSRA. Cystine bridges form between C38–C88, C52–C102, C62–C121, C66–C123, and C85–C126. Residues 38-127 enclose the CTCK domain; it reads CEAKNITQIV…ILHCSCQSCS (90 aa). Positions 145-170 are disordered; it reads AQDLPSLPDATHTHPQHAHMQADQRD.

It belongs to the DAN family.

The protein localises to the secreted. Functionally, may act as a tumor suppressor. The polypeptide is Neuroblastoma suppressor of tumorigenicity 1 (nbl1) (Danio rerio (Zebrafish)).